Consider the following 297-residue polypeptide: Coiled-coil domain-containing protein 196 (297 aa).

Residues 83–117 (ESSVMELLKEAEEMKQNLERKNKMLRKEMEMLWNK) are a coiled coil. Residues 122–161 (EELSDQQKAPQTKNKADLQDGKAPKSPSSPRKTESELEKS) form a disordered region. Basic and acidic residues-rich tracts occupy residues 135–144 (NKADLQDGKA) and 152–161 (RKTESELEKS).

This is Coiled-coil domain-containing protein 196 from Homo sapiens (Human).